Here is a 205-residue protein sequence, read N- to C-terminus: Potassium-transporting ATPase KdpC subunit (205 aa).

The helical transmembrane segment at 7–27 (PAIVILVALTIITGLIYPLAM) threads the bilayer.

This sequence belongs to the KdpC family. The system is composed of three essential subunits: KdpA, KdpB and KdpC.

Its subcellular location is the cell inner membrane. Functionally, part of the high-affinity ATP-driven potassium transport (or Kdp) system, which catalyzes the hydrolysis of ATP coupled with the electrogenic transport of potassium into the cytoplasm. This subunit acts as a catalytic chaperone that increases the ATP-binding affinity of the ATP-hydrolyzing subunit KdpB by the formation of a transient KdpB/KdpC/ATP ternary complex. This Nitrobacter hamburgensis (strain DSM 10229 / NCIMB 13809 / X14) protein is Potassium-transporting ATPase KdpC subunit.